The chain runs to 302 residues: B3 domain-containing protein At3g17010 (302 aa).

A DNA-binding region (TF-B3 1) is located at residues 21-116 (FFKIFQRADL…VFHVNIYEQN (96 aa)). The disordered stretch occupies residues 123–192 (PRKFQTMGPS…KVKKKSKSKS (70 aa)). Positions 135–174 (IKKEEGENSLIDVKKEEESDESPGRAEFLVRKKKTEDSKS) are enriched in basic and acidic residues. Residues 175-192 (SKKKMTRNKVKKKSKSKS) are compositionally biased toward basic residues. The segment at residues 199–292 (VPEFKITIRK…EFVLLTSKKN (94 aa)) is a DNA-binding region (TF-B3 2).

Its subcellular location is the nucleus. The protein is B3 domain-containing protein At3g17010 of Arabidopsis thaliana (Mouse-ear cress).